The primary structure comprises 227 residues: Uracil-DNA glycosylase 2 (227 aa).

Catalysis depends on aspartate 67, which acts as the Proton acceptor.

Belongs to the uracil-DNA glycosylase (UDG) superfamily. UNG family.

The protein resides in the cytoplasm. The enzyme catalyses Hydrolyzes single-stranded DNA or mismatched double-stranded DNA and polynucleotides, releasing free uracil.. Excises uracil residues from the DNA which can arise as a result of misincorporation of dUMP residues by DNA polymerase or due to deamination of cytosine. The polypeptide is Uracil-DNA glycosylase 2 (ung2) (Streptomyces coelicolor (strain ATCC BAA-471 / A3(2) / M145)).